We begin with the raw amino-acid sequence, 274 residues long: MEALRQRIEAAFETRQDISPSSVEPSVRADVETVINMLDKGQARVAEKIDGEWHVHQWLKKAVLLSFRIFDNGVIEGGDTKYFDKVPQKFADYDEARFKAEGIRVVPPATVRKGSFIGKNTVLMPSYVNLGAYVDEGTMVDTWATVGSCAQIGKNVHLSGGVGIGGVLEPLQAGPTIIEDNCFIGARSEIVEGVVVEEGSVISMGVYIGQSTRIFDRETGEVHYGRVPAGSVVVSGNLPSACGTYSLYAAIIVKKVDAKTRGKVGINELLRIVD.

The substrate site is built by Arg-104 and Asp-141.

This sequence belongs to the transferase hexapeptide repeat family. In terms of assembly, homotrimer.

Its subcellular location is the cytoplasm. The enzyme catalyses (S)-2,3,4,5-tetrahydrodipicolinate + succinyl-CoA + H2O = (S)-2-succinylamino-6-oxoheptanedioate + CoA. It participates in amino-acid biosynthesis; L-lysine biosynthesis via DAP pathway; LL-2,6-diaminopimelate from (S)-tetrahydrodipicolinate (succinylase route): step 1/3. In Shewanella frigidimarina (strain NCIMB 400), this protein is 2,3,4,5-tetrahydropyridine-2,6-dicarboxylate N-succinyltransferase.